A 44-amino-acid chain; its full sequence is Photosystem I reaction center subunit IX (44 aa).

The chain crosses the membrane as a helical span at residues 7 to 27 (YLSVAPVLATLWFGSLAGLLI).

Belongs to the PsaJ family.

It is found in the plastid. It localises to the chloroplast thylakoid membrane. May help in the organization of the PsaE and PsaF subunits. This chain is Photosystem I reaction center subunit IX, found in Piper cenocladum (Ant piper).